A 287-amino-acid chain; its full sequence is Uricase (287 aa).

Active-site charge relay system residues include lysine 11 and threonine 58. Urate is bound by residues threonine 58, aspartate 59, phenylalanine 160, arginine 177, valine 219, glutamine 220, and asparagine 246. The active-site Charge relay system is the histidine 248. The Microbody targeting signal motif lies at 285–287 (SRL).

Belongs to the uricase family.

It localises to the peroxisome. The enzyme catalyses urate + O2 + H2O = 5-hydroxyisourate + H2O2. The protein operates within purine metabolism; urate degradation; (S)-allantoin from urate: step 1/3. In terms of biological role, catalyzes the oxidation of uric acid to 5-hydroxyisourate, which is further processed to form (S)-allantoin. The protein is Uricase (uox) of Dictyostelium discoideum (Social amoeba).